Consider the following 407-residue polypeptide: MRSWSAPDIVPLPGTGGPLRVHDTATGRIRTTTPGPRAGMYACGITPYDAAHLGHAFTYLTFDLVNRVWRDAGHDVNYVQNTTDIDDPLLERAEATGVDWRDLAHREIDVFREDMAALRIIPPTSYVGVVESVDLISDLAARIRDTGAAYELDGDLYFSVAEAPEFGEISNLDRGQMLELFGERGGDPQRTGKKDPLDWLLWRAERPGEPAWDSPLGRGRPGWHIECSAIALDRLGPAFDLNGGGSDLIFPHHEMGAAETRCATGGPNAHNHLHVGMVGLDGEKMSKSLGNLVFVSKLRQQGVDPAVIRLAMLAHHYRAPWEWTDAELPAATARAERWRSALALGAAPDAAPVLAAVRAALSEDLDSPAALAAVDAWADTALTEGGADTGAPALVRATVDTLLGVRL.

The disordered stretch occupies residues 1–22; it reads MRSWSAPDIVPLPGTGGPLRVH. C43 contacts Zn(2+). L-cysteinyl-5'-AMP is bound by residues 43–46, T58, and 81–83; these read CGIT and NTT. Residues 45–55 carry the 'HIGH' region motif; that stretch reads ITPYDAAHLGH. Residues 183–188 carry the 'ERGGDP' region motif; sequence ERGGDP. W223 serves as a coordination point for L-cysteinyl-5'-AMP. C227 is a Zn(2+) binding site. Position 245-247 (245-247) interacts with L-cysteinyl-5'-AMP; it reads GSD. Residue H252 participates in Zn(2+) binding. V278 lines the L-cysteinyl-5'-AMP pocket. A 'KMSKS' region motif is present at residues 284–288; it reads KMSKS.

This sequence belongs to the class-I aminoacyl-tRNA synthetase family. MshC subfamily. In terms of assembly, monomer. Zn(2+) is required as a cofactor.

It catalyses the reaction 1D-myo-inositol 2-amino-2-deoxy-alpha-D-glucopyranoside + L-cysteine + ATP = 1D-myo-inositol 2-(L-cysteinylamino)-2-deoxy-alpha-D-glucopyranoside + AMP + diphosphate + H(+). Catalyzes the ATP-dependent condensation of GlcN-Ins and L-cysteine to form L-Cys-GlcN-Ins. The polypeptide is L-cysteine:1D-myo-inositol 2-amino-2-deoxy-alpha-D-glucopyranoside ligase (Nocardiopsis dassonvillei (strain ATCC 23218 / DSM 43111 / CIP 107115 / JCM 7437 / KCTC 9190 / NBRC 14626 / NCTC 10488 / NRRL B-5397 / IMRU 509) (Actinomadura dassonvillei)).